Reading from the N-terminus, the 347-residue chain is Transcription factor EC (347 aa).

The necessary for transcriptional transactivation stretch occupies residues 1–119; that stretch reads MTLDHQIINP…GLTSASCPSS (119 aa). A bHLH domain is found at 139–192; sequence QKKDNHNLIERRRRYNINYRIKELGTLIPKSNDPDMRWNKGTILKASVEYIKWL. The interval 271–347 is necessary for transcriptional transactivation; the sequence is PSPEFCDQAI…SFSSDDGDEL (77 aa). The segment at 319–347 is disordered; sequence DPLLSATSPAVSKESSRRSSFSSDDGDEL. Residues 326-341 show a composition bias toward low complexity; it reads SPAVSKESSRRSSFSS.

It belongs to the MiT/TFE family. Homodimer. Forms heterodimers with MITF and TFE3. Interacts with MITF.

Its subcellular location is the nucleus. Its function is as follows. Transcriptional regulator that acts as a repressor or an activator. Acts as a transcriptional repressor on minimal promoter containing element F (that includes an E-box sequence). Binds to element F in an E-box sequence-specific manner. Acts as a transcriptional transactivator on the proximal promoter region of the tartrate-resistant acid phosphatase (TRAP) E-box containing promoter. Collaborates with MITF in target gene activation. Acts as a transcriptional repressor on minimal promoter containing mu E3 enhancer sequence. Binds to mu E3 DNA sequence of the immunoglobulin heavy-chain gene enhancer. Binds DNA in a homo- or heterodimeric form. The polypeptide is Transcription factor EC (TFEC) (Pan troglodytes (Chimpanzee)).